Here is a 158-residue protein sequence, read N- to C-terminus: Urease accessory protein UreE (158 aa).

The disordered stretch occupies residues 133-158 (PEGGAYQAHSHDGHSHHQGHTHDHHD). The span at 141–158 (HSHDGHSHHQGHTHDHHD) shows a compositional bias: basic and acidic residues.

The protein belongs to the UreE family.

Its subcellular location is the cytoplasm. Its function is as follows. Involved in urease metallocenter assembly. Binds nickel. Probably functions as a nickel donor during metallocenter assembly. The chain is Urease accessory protein UreE from Chelativorans sp. (strain BNC1).